Consider the following 341-residue polypeptide: Biotin synthase (341 aa).

In terms of domain architecture, Radical SAM core spans 53–272 (NHVETASLLS…IAVARIMMPK (220 aa)). The [4Fe-4S] cluster site is built by Cys68, Cys72, and Cys75. Cys112, Cys143, Cys203, and Arg276 together coordinate [2Fe-2S] cluster.

This sequence belongs to the radical SAM superfamily. Biotin synthase family. As to quaternary structure, homodimer. It depends on [4Fe-4S] cluster as a cofactor. [2Fe-2S] cluster is required as a cofactor.

The catalysed reaction is (4R,5S)-dethiobiotin + (sulfur carrier)-SH + 2 reduced [2Fe-2S]-[ferredoxin] + 2 S-adenosyl-L-methionine = (sulfur carrier)-H + biotin + 2 5'-deoxyadenosine + 2 L-methionine + 2 oxidized [2Fe-2S]-[ferredoxin]. The protein operates within cofactor biosynthesis; biotin biosynthesis; biotin from 7,8-diaminononanoate: step 2/2. Functionally, catalyzes the conversion of dethiobiotin (DTB) to biotin by the insertion of a sulfur atom into dethiobiotin via a radical-based mechanism. This chain is Biotin synthase, found in Nitrobacter winogradskyi (strain ATCC 25391 / DSM 10237 / CIP 104748 / NCIMB 11846 / Nb-255).